A 143-amino-acid chain; its full sequence is Transcriptional regulator MraZ (143 aa).

SpoVT-AbrB domains are found at residues 5–47 (THTP…PMQE) and 76–119 (ASSE…DLRT).

Belongs to the MraZ family. In terms of assembly, forms oligomers.

The protein localises to the cytoplasm. It is found in the nucleoid. The sequence is that of Transcriptional regulator MraZ from Kineococcus radiotolerans (strain ATCC BAA-149 / DSM 14245 / SRS30216).